Here is a 136-residue protein sequence, read N- to C-terminus: uncharacterized protein (136 aa).

It is found in the mitochondrion. This is an uncharacterized protein from Marchantia polymorpha (Common liverwort).